Consider the following 44-residue polypeptide: Small, acid-soluble spore protein P (44 aa).

The interval 1 to 44 (MSHTMGKNNREAKEKKGQPEPLSGSHKVKNRNHSRQKHHAHHDM) is disordered. Positions 8–18 (NNREAKEKKGQ) are enriched in basic and acidic residues. The span at 26 to 44 (HKVKNRNHSRQKHHAHHDM) shows a compositional bias: basic residues.

The protein belongs to the SspP family.

It is found in the spore core. The sequence is that of Small, acid-soluble spore protein P from Bacillus cereus (strain ATCC 14579 / DSM 31 / CCUG 7414 / JCM 2152 / NBRC 15305 / NCIMB 9373 / NCTC 2599 / NRRL B-3711).